The chain runs to 202 residues: Putative pituitary tumor-transforming gene 3 protein (202 aa).

The short motif at 61-64 is the D-box element; that stretch reads RKAL. The short motif at 163–173 is the SH3-binding element; that stretch reads PPSPLKMPSPP.

The protein belongs to the securin family.

It is found in the cytoplasm. The protein localises to the nucleus. The chain is Putative pituitary tumor-transforming gene 3 protein (PTTG3) from Pan troglodytes (Chimpanzee).